We begin with the raw amino-acid sequence, 189 residues long: Crossover junction endodeoxyribonuclease RuvC (189 aa).

Active-site residues include D9, E70, and D143. Mg(2+) contacts are provided by D9, E70, and D143. A compositionally biased stretch (low complexity) spans M162–W178. A disordered region spans residues M162–R189. The segment covering A179–R189 has biased composition (basic and acidic residues).

This sequence belongs to the RuvC family. In terms of assembly, homodimer which binds Holliday junction (HJ) DNA. The HJ becomes 2-fold symmetrical on binding to RuvC with unstacked arms; it has a different conformation from HJ DNA in complex with RuvA. In the full resolvosome a probable DNA-RuvA(4)-RuvB(12)-RuvC(2) complex forms which resolves the HJ. The cofactor is Mg(2+).

The protein resides in the cytoplasm. The catalysed reaction is Endonucleolytic cleavage at a junction such as a reciprocal single-stranded crossover between two homologous DNA duplexes (Holliday junction).. The RuvA-RuvB-RuvC complex processes Holliday junction (HJ) DNA during genetic recombination and DNA repair. Endonuclease that resolves HJ intermediates. Cleaves cruciform DNA by making single-stranded nicks across the HJ at symmetrical positions within the homologous arms, yielding a 5'-phosphate and a 3'-hydroxyl group; requires a central core of homology in the junction. The consensus cleavage sequence is 5'-(A/T)TT(C/G)-3'. Cleavage occurs on the 3'-side of the TT dinucleotide at the point of strand exchange. HJ branch migration catalyzed by RuvA-RuvB allows RuvC to scan DNA until it finds its consensus sequence, where it cleaves and resolves the cruciform DNA. The chain is Crossover junction endodeoxyribonuclease RuvC from Paenarthrobacter aurescens (strain TC1).